Here is a 76-residue protein sequence, read N- to C-terminus: Monocarboxylate transporter 1 (76 aa).

3 helical membrane passes run 1–18, 28–48, and 53–73; these read LSIL…MGLA, IQYF…LAPL, and IGFC…SSVL. Residue aspartate 8 participates in H(+) binding. Residue arginine 12 coordinates (S)-lactate.

The protein belongs to the major facilitator superfamily. Monocarboxylate porter (TC 2.A.1.13) family. Interacts with BSG; interaction mediates SLC16A1 targeting to the plasma membrane. Interacts with EMB; interaction mediates SLC16A1 targeting to the plasma membrane.

Its subcellular location is the cell membrane. It localises to the basolateral cell membrane. The protein localises to the apical cell membrane. It carries out the reaction (S)-lactate(in) + H(+)(in) = (S)-lactate(out) + H(+)(out). The enzyme catalyses acetate(out) + H(+)(out) = acetate(in) + H(+)(in). The catalysed reaction is acetoacetate(out) + H(+)(out) = acetoacetate(in) + H(+)(in). It catalyses the reaction pyruvate(out) + H(+)(out) = pyruvate(in) + H(+)(in). It carries out the reaction (R)-3-hydroxybutanoate(out) + H(+)(out) = (R)-3-hydroxybutanoate(in) + H(+)(in). The enzyme catalyses 3-methyl-2-oxobutanoate(out) + H(+)(out) = 3-methyl-2-oxobutanoate(in) + H(+)(in). The catalysed reaction is 4-methyl-2-oxopentanoate(out) + H(+)(out) = 4-methyl-2-oxopentanoate(in) + H(+)(in). It catalyses the reaction succinate(in) + 2 H(+)(in) = succinate(out) + 2 H(+)(out). Functionally, bidirectional proton-coupled monocarboxylate transporter. Catalyzes the rapid transport across the plasma membrane of many monocarboxylates such as lactate, pyruvate, acetate and the ketone bodies acetoacetate and beta-hydroxybutyrate, and thus contributes to the maintenance of intracellular pH. The transport direction is determined by the proton motive force and the concentration gradient of the substrate monocarboxylate. MCT1 is a major lactate exporter. Plays a role in cellular responses to a high-fat diet by modulating the cellular levels of lactate and pyruvate that contribute to the regulation of central metabolic pathways and insulin secretion, with concomitant effects on plasma insulin levels and blood glucose homeostasis. Facilitates the protonated monocarboxylate form of succinate export, that its transient protonation upon muscle cell acidification in exercising muscle and ischemic heart. Functions via alternate outward- and inward-open conformation states. Protonation and deprotonation is essential for the conformational transition. The protein is Monocarboxylate transporter 1 (SLC16A1) of Meriones unguiculatus (Mongolian jird).